Consider the following 131-residue polypeptide: Small ribosomal subunit protein bS16 (131 aa).

A compositionally biased stretch (basic and acidic residues) spans 87–117 (IGKSKQEELRKSEAKTSAKNKKANEEKANEE). Residues 87–131 (IGKSKQEELRKSEAKTSAKNKKANEEKANEEKVEESETLEASSEA) are disordered.

Belongs to the bacterial ribosomal protein bS16 family.

The chain is Small ribosomal subunit protein bS16 from Prochlorococcus marinus (strain SARG / CCMP1375 / SS120).